Reading from the N-terminus, the 478-residue chain is Multidrug resistance outer membrane protein MdtQ (478 aa).

The N-terminal stretch at 1-21 is a signal peptide; the sequence is MNRDSFYPAIACFPLLLMLAG. The N-palmitoyl cysteine moiety is linked to residue cysteine 22. The S-diacylglycerol cysteine moiety is linked to residue cysteine 22.

This sequence belongs to the outer membrane factor (OMF) (TC 1.B.17) family.

It localises to the cell outer membrane. Functionally, could be involved in resistance to puromycin, acriflavine and tetraphenylarsonium chloride. The polypeptide is Multidrug resistance outer membrane protein MdtQ (mdtQ) (Escherichia coli O157:H7).